Reading from the N-terminus, the 330-residue chain is Ferredoxin--NADP reductase (330 aa).

FAD contacts are provided by E34, Q42, Y47, V87, F121, D285, and S325.

This sequence belongs to the ferredoxin--NADP reductase type 2 family. Homodimer. FAD is required as a cofactor.

It catalyses the reaction 2 reduced [2Fe-2S]-[ferredoxin] + NADP(+) + H(+) = 2 oxidized [2Fe-2S]-[ferredoxin] + NADPH. In Limosilactobacillus fermentum (strain NBRC 3956 / LMG 18251) (Lactobacillus fermentum), this protein is Ferredoxin--NADP reductase.